The chain runs to 283 residues: Thymidylate synthase (283 aa).

Position 22 (Arg22) interacts with dUMP. Catalysis depends on Cys160, which acts as the Nucleophile. Residues Arg180–Asp183, Asn191, and His221–Tyr223 each bind dUMP. Asp183 contributes to the (6R)-5,10-methylene-5,6,7,8-tetrahydrofolate binding site. Ser282 lines the (6R)-5,10-methylene-5,6,7,8-tetrahydrofolate pocket.

It belongs to the thymidylate synthase family. Bacterial-type ThyA subfamily. Homodimer.

The protein resides in the cytoplasm. The catalysed reaction is dUMP + (6R)-5,10-methylene-5,6,7,8-tetrahydrofolate = 7,8-dihydrofolate + dTMP. It functions in the pathway pyrimidine metabolism; dTTP biosynthesis. In terms of biological role, catalyzes the reductive methylation of 2'-deoxyuridine-5'-monophosphate (dUMP) to 2'-deoxythymidine-5'-monophosphate (dTMP) while utilizing 5,10-methylenetetrahydrofolate (mTHF) as the methyl donor and reductant in the reaction, yielding dihydrofolate (DHF) as a by-product. This enzymatic reaction provides an intracellular de novo source of dTMP, an essential precursor for DNA biosynthesis. This is Thymidylate synthase from Shewanella loihica (strain ATCC BAA-1088 / PV-4).